Reading from the N-terminus, the 528-residue chain is Peptide chain release factor 3 (528 aa).

The 269-residue stretch at D10–H278 folds into the tr-type G domain. Residues S19–T26, D87–H91, and N141–D144 contribute to the GTP site.

Belongs to the TRAFAC class translation factor GTPase superfamily. Classic translation factor GTPase family. PrfC subfamily.

It is found in the cytoplasm. Functionally, increases the formation of ribosomal termination complexes and stimulates activities of RF-1 and RF-2. It binds guanine nucleotides and has strong preference for UGA stop codons. It may interact directly with the ribosome. The stimulation of RF-1 and RF-2 is significantly reduced by GTP and GDP, but not by GMP. The sequence is that of Peptide chain release factor 3 from Syntrophobacter fumaroxidans (strain DSM 10017 / MPOB).